The chain runs to 164 residues: Urease subunit beta (164 aa).

2 stretches are compositionally biased toward polar residues: residues 1–10 (MSTKTNSTKA) and 20–32 (TNRG…GYSE). Positions 1 to 32 (MSTKTNSTKATSEKTDSLKTNRGTKSSAGYSE) are disordered.

Belongs to the urease beta subunit family. In terms of assembly, heterotrimer of UreA (gamma), UreB (beta) and UreC (alpha) subunits. Three heterotrimers associate to form the active enzyme.

It is found in the cytoplasm. The catalysed reaction is urea + 2 H2O + H(+) = hydrogencarbonate + 2 NH4(+). It functions in the pathway nitrogen metabolism; urea degradation; CO(2) and NH(3) from urea (urease route): step 1/1. The protein is Urease subunit beta of Yersinia enterocolitica serotype O:8 / biotype 1B (strain NCTC 13174 / 8081).